Consider the following 302-residue polypeptide: MSDSRLRRRQGTAGTDNKRRADGPHDISGLLDGVSVVLLDIEGTTTPITFVKDELFPYVCSHVRQHLEEHWKEEECQEDIAALRKQAKEDKEMDGVVLIPECTTKDDDEEARKKVLSAVVDNVLLNMDADRKVTALKQLQGHMWRAAYQTGKIKGEYVKLTFADVVPAIRGWLETGRQVYIYSSGSVEAQKLLFGFSTEGDLLELFSGHFDTTTGLKVETESYRRIAKTVGCDPANILFLTDVVREAKPSREAGMKTCLTVRPGNAPLTEEDWANYPVIKSFSELACDVSPTKMRSRGKAAT.

Basic residues predominate over residues 1–10 (MSDSRLRRRQ). The segment at 1 to 25 (MSDSRLRRRQGTAGTDNKRRADGPH) is disordered. The segment covering 16–25 (DNKRRADGPH) has biased composition (basic and acidic residues). Residues aspartate 40 and glutamate 42 each contribute to the Mg(2+) site. Substrate-binding positions include 183-184 (SS) and lysine 217. Aspartate 242 lines the Mg(2+) pocket.

This sequence belongs to the HAD-like hydrolase superfamily. MasA/MtnC family. In terms of assembly, monomer. Mg(2+) is required as a cofactor.

The protein resides in the cytoplasm. The protein localises to the nucleus. The enzyme catalyses 5-methylsulfanyl-2,3-dioxopentyl phosphate + H2O = 1,2-dihydroxy-5-(methylsulfanyl)pent-1-en-3-one + phosphate. It participates in amino-acid biosynthesis; L-methionine biosynthesis via salvage pathway; L-methionine from S-methyl-5-thio-alpha-D-ribose 1-phosphate: step 3/6. Its pathway is amino-acid biosynthesis; L-methionine biosynthesis via salvage pathway; L-methionine from S-methyl-5-thio-alpha-D-ribose 1-phosphate: step 4/6. In terms of biological role, bifunctional enzyme that catalyzes the enolization of 2,3-diketo-5-methylthiopentyl-1-phosphate (DK-MTP-1-P) into the intermediate 2-hydroxy-3-keto-5-methylthiopentenyl-1-phosphate (HK-MTPenyl-1-P), which is then dephosphorylated to form the acireductone 1,2-dihydroxy-3-keto-5-methylthiopentene (DHK-MTPene). The polypeptide is Enolase-phosphatase E1 (Branchiostoma floridae (Florida lancelet)).